The following is a 270-amino-acid chain: Cyclohexanol dehydrogenase (270 aa).

NAD(+) is bound by residues Arg19, Asp40, Asp78, Val79, Asn105, Tyr176, Lys180, Ile209, and Thr211. The active-site Proton acceptor is Tyr176.

The protein belongs to the short-chain dehydrogenases/reductases (SDR) family. Homodimer.

The protein localises to the cytoplasm. It carries out the reaction cyclohexanol + NAD(+) = cyclohexanone + NADH + H(+). Activity is enhanced by the addition of Ba(2+) and Mg(2+), but inhibited by the addition of Al(3+), Ca(2+), Co(2+), Cu(2+), Mn(2+) and Zn(2+). In terms of biological role, catalyzes the oxidation of cyclohexanol to cyclohexanone. Can also use a broad range of other alcohols, including trans-cyclohexane-1,2-diol, trans-cyclopentane-1,2-diol, cyclopentanol, hexane-1,2-diol, ethanol, 1-propanol, 1-butanol, 1-pentanol and 1-hexanol. This Rhodococcus sp. (strain TK6) protein is Cyclohexanol dehydrogenase.